Here is a 654-residue protein sequence, read N- to C-terminus: Probable replication restart protein PriA (654 aa).

Zn(2+) contacts are provided by cysteine 367, cysteine 370, cysteine 376, cysteine 379, cysteine 395, cysteine 398, cysteine 407, and cysteine 410.

Belongs to the helicase family. PriA subfamily. Component of the replication restart primosome. Zn(2+) is required as a cofactor.

Its function is as follows. Initiates the restart of stalled replication forks, which reloads the replicative helicase on sites other than the origin of replication. Recognizes and binds to abandoned replication forks and remodels them to uncover a helicase loading site. Promotes assembly of the primosome at these replication forks. The chain is Probable replication restart protein PriA from Mycobacterium tuberculosis (strain CDC 1551 / Oshkosh).